The following is a 182-amino-acid chain: Probable RNA 2'-phosphotransferase (182 aa).

It belongs to the KptA/TPT1 family.

Its function is as follows. Removes the 2'-phosphate from RNA via an intermediate in which the phosphate is ADP-ribosylated by NAD followed by a presumed transesterification to release the RNA and generate ADP-ribose 1''-2''-cyclic phosphate (APPR&gt;P). May function as an ADP-ribosylase. This Pseudomonas paraeruginosa (strain DSM 24068 / PA7) (Pseudomonas aeruginosa (strain PA7)) protein is Probable RNA 2'-phosphotransferase.